The chain runs to 405 residues: ATP phosphoribosyltransferase regulatory subunit (405 aa).

Belongs to the class-II aminoacyl-tRNA synthetase family. HisZ subfamily. Heteromultimer composed of HisG and HisZ subunits.

Its subcellular location is the cytoplasm. Its pathway is amino-acid biosynthesis; L-histidine biosynthesis; L-histidine from 5-phospho-alpha-D-ribose 1-diphosphate: step 1/9. Required for the first step of histidine biosynthesis. May allow the feedback regulation of ATP phosphoribosyltransferase activity by histidine. The polypeptide is ATP phosphoribosyltransferase regulatory subunit (Oceanobacillus iheyensis (strain DSM 14371 / CIP 107618 / JCM 11309 / KCTC 3954 / HTE831)).